The primary structure comprises 114 residues: U10-agatoxin-Ao1a (114 aa).

An N-terminal signal peptide occupies residues 1–15 (MCVATCLCTFAYVLA). Residues 16–32 (KSDEGENLISKVEETQR) constitute a propeptide that is removed on maturation. 5 cysteine pairs are disulfide-bonded: Cys-34-Cys-53, Cys-41-Cys-59, Cys-50-Cys-86, Cys-52-Cys-76, and Cys-61-Cys-74. The disordered stretch occupies residues 95-114 (GSQNPSLCKDPNPRRRRHGK).

Belongs to the neurotoxin 04 (omega-agtx) family. 03 (type II/III omega-agtx) subfamily. Expressed by the venom gland.

It localises to the secreted. Its function is as follows. Inhibits voltage-gated calcium channels (Cav). The chain is U10-agatoxin-Ao1a from Agelena orientalis (Funnel-web spider).